Here is a 271-residue protein sequence, read N- to C-terminus: Putative carboxymethylenebutenolidase (271 aa).

Residues Cys147, Asp204, and His236 contribute to the active site.

This sequence belongs to the dienelactone hydrolase family.

It catalyses the reaction 2-(5-oxo-2,5-dihydrofuran-2-ylidene)acetate + H2O = 4-oxohex-2-enedioate + H(+). This is Putative carboxymethylenebutenolidase (ysgA) from Escherichia coli (strain K12).